An 82-amino-acid chain; its full sequence is Turripeptide Lol6.1 (82 aa).

A signal peptide spans 1–23; that stretch reads MRFHWIPTLTVLLVLSMSFGTEA. The propeptide occupies 24–48; the sequence is IPXXXXXXXXXXXXXXXXXXXXXXX. Cystine bridges form between Cys-54-Cys-66, Cys-58-Cys-71, and Cys-65-Cys-77.

In terms of tissue distribution, expressed by the venom duct.

It is found in the secreted. Acts as a neurotoxin by inhibiting an ion channel. In Iotyrris olangoensis (Sea snail), this protein is Turripeptide Lol6.1.